Reading from the N-terminus, the 295-residue chain is Bifunctional protein FolD (295 aa).

NADP(+) contacts are provided by residues 165–167 (GRS), S190, and I231.

The protein belongs to the tetrahydrofolate dehydrogenase/cyclohydrolase family. Homodimer.

The catalysed reaction is (6R)-5,10-methylene-5,6,7,8-tetrahydrofolate + NADP(+) = (6R)-5,10-methenyltetrahydrofolate + NADPH. It carries out the reaction (6R)-5,10-methenyltetrahydrofolate + H2O = (6R)-10-formyltetrahydrofolate + H(+). The protein operates within one-carbon metabolism; tetrahydrofolate interconversion. Catalyzes the oxidation of 5,10-methylenetetrahydrofolate to 5,10-methenyltetrahydrofolate and then the hydrolysis of 5,10-methenyltetrahydrofolate to 10-formyltetrahydrofolate. The protein is Bifunctional protein FolD of Nitrosomonas europaea (strain ATCC 19718 / CIP 103999 / KCTC 2705 / NBRC 14298).